The following is a 484-amino-acid chain: Arginine ADP-riboxanase OspC3 (484 aa).

NAD(+)-binding residues include His143, Gln144, Ser145, Asn155, Lys157, Thr169, Asn172, and Thr173. Glu326 is a catalytic residue. ANK repeat units lie at residues 369-398 (MAHQ…FTKQ), 413-444 (NLYD…DVNK), and 451-480 (SGDT…ILGK).

It belongs to the OspC family. As to quaternary structure, interacts with host calmodulin (CALM1, CALM2 and/or CALM3); specifically interacts with the apo form of calmodulin, preventing calcium-binding.

It is found in the secreted. The protein resides in the host cytoplasm. It carries out the reaction L-arginyl-[protein] + NAD(+) = ADP-riboxanated L-argininyl-[protein] + nicotinamide + NH4(+) + H(+). Interaction with host calmodulin (CALM1, CALM2 and/or CALM3) is required to mediate arginine ADP-riboxanation of host caspases. Functionally, ADP-riboxanase effector that inhibits host cell pyroptosis. Acts by mediating arginine ADP-riboxanation of host CASP4/CASP11, blocking CASP4/CASP11 autoprocessing. This prevents CASP4 activation and ability to recognize and cleave GSDMD, thereby inhibiting LPS-induced pyroptosis. ADP-riboxanation takes place in two steps: OspC3 first catalyzes ADP-ribosylation of target Arg, and then initiates a deamination to remove one N-omega group. Independently of its ADP-riboxanase activity, acts as an inhibitor of calcium signaling by inhibiting host calmodulin, preventing activation of the JAK-STAT signaling pathway in response to interferon-beta. Mechanistically, acts by binding to the apo form of calmodulin, preventing calcium-binding and ability to activate host CaMK2 (CAMKII), which is required to stimulate the JAK-STAT signaling pathway in response to interferon-beta. The chain is Arginine ADP-riboxanase OspC3 from Shigella flexneri.